Here is a 902-residue protein sequence, read N- to C-terminus: Proline-rich transmembrane protein 4 (902 aa).

The N-terminal stretch at 1–18 (MAGRGCLELGLFCWVLLA) is a signal peptide. 2 disordered regions span residues 120-149 (FTPW…SQPR) and 262-337 (PPPL…SGQP). Positions 125-139 (SSLPPESTSPLSGPT) are enriched in low complexity. Positions 271 to 301 (SSPSPLDSVASPSSASIKTTPVQHDPTVSTS) are enriched in polar residues. A run of 5 helical transmembrane segments spans residues 371 to 391 (AGAL…LLPW), 393 to 413 (CPPG…AGTT), 431 to 451 (ALAW…GLGL), 465 to 485 (PIGL…AALG), and 501 to 521 (GLHA…SCWG). Phosphoserine is present on Ser-642. Disordered stretches follow at residues 700–721 (GARA…TVDF), 771–811 (KTGA…SLCG), and 836–872 (VLSP…ASEL). Residues 703–717 (ANTTQSPASSPSSDC) are compositionally biased toward polar residues. The span at 786 to 798 (SPAPPELPSPGAW) shows a compositional bias: pro residues. Low complexity-rich tracts occupy residues 799–811 (PPGS…SLCG) and 843–854 (SESSPSLPASGS).

The protein localises to the membrane. The sequence is that of Proline-rich transmembrane protein 4 (Prrt4) from Rattus norvegicus (Rat).